A 397-amino-acid polypeptide reads, in one-letter code: Protein EMSY-LIKE 3 (397 aa).

Residues 1–40 (MDYRPSDSSGTDDDLPPSHQGRYQRNARPTGNGRPSVLNS) are disordered. The 88-residue stretch at 50-137 (METQIHLIEQ…PQLVHDAPSP (88 aa)) folds into the ENT domain. A coiled-coil region spans residues 81–107 (ESLITELRKELRVSDEEHRELLSRVNA). Disordered stretches follow at residues 122-221 (SLQS…SYDP) and 284-330 (DPGI…TQNG). A compositionally biased stretch (polar residues) spans 164–174 (LHPSMQPSSSA). The Nuclear localization signal motif lies at 175 to 182 (LRRGGPPP). Positions 363–389 (AEVEKAKRVLRDHELALMDAIAKLEEI) form a coiled coil. S390 carries the phosphoserine modification.

It is found in the nucleus. Probably involved in the regulation of chromatin states. Contributes to basal immunity. The protein is Protein EMSY-LIKE 3 of Arabidopsis thaliana (Mouse-ear cress).